The following is a 198-amino-acid chain: Recombination protein RecR (198 aa).

The C4-type zinc finger occupies 57-72 (CSVCGHITENDPCYIC). The Toprim domain maps to 80–175 (SVICVVEDDK…KVTRLAQGLS (96 aa)).

The protein belongs to the RecR family.

Functionally, may play a role in DNA repair. It seems to be involved in an RecBC-independent recombinational process of DNA repair. It may act with RecF and RecO. In Staphylococcus haemolyticus (strain JCSC1435), this protein is Recombination protein RecR.